Consider the following 168-residue polypeptide: Nicotinamide-nucleotide adenylyltransferase (168 aa).

This sequence belongs to the archaeal NMN adenylyltransferase family.

Its subcellular location is the cytoplasm. The enzyme catalyses beta-nicotinamide D-ribonucleotide + ATP + H(+) = diphosphate + NAD(+). It participates in cofactor biosynthesis; NAD(+) biosynthesis; NAD(+) from nicotinamide D-ribonucleotide: step 1/1. This is Nicotinamide-nucleotide adenylyltransferase from Methanosphaerula palustris (strain ATCC BAA-1556 / DSM 19958 / E1-9c).